The sequence spans 106 residues: MTGVDDISSNVHKLVGVTAGMNTAASTGPMNLVLDKCSVVLEELRTIQILTETHSEGLSEQLKMTEKNILEMENLFDQIDQLCLFVQKAKSDLDKLEKLYNVVDRQ.

Residues 53–106 (THSEGLSEQLKMTEKNILEMENLFDQIDQLCLFVQKAKSDLDKLEKLYNVVDRQ) adopt a coiled-coil conformation.

Belongs to the BLOC1S4 family. As to quaternary structure, component of the biogenesis of lysosome-related organelles complex-1 (BLOC-1) composed at least of blos-1, blos-2, blos-4, dsbn-1, glo-2, mutd-1 and snpn-1. Interacts with glo-2.

Its function is as follows. Component of the biogenesis of lysosome-related organelles complex-1 (BLOC-1) involved in gut granule biogenesis. The chain is Biogenesis of lysosome-related organelles complex 1 subunit 4 (blos-4) from Caenorhabditis elegans.